The primary structure comprises 443 residues: Minovincinine 19-hydroxy-O-acetyltransferase (443 aa).

The active-site Proton acceptor is the His157. The Nuclear localization signal motif lies at 215 to 222; it reads RKRFLFSP. The stretch at 316 to 343 forms a coiled coil; that stretch reads TKLVIGELRKAKDKLKNLSQEKLNYVAR. Residue Asp384 is the Proton acceptor of the active site.

The protein belongs to the plant acyltransferase family. As to quaternary structure, monomer. In terms of tissue distribution, expressed in cortical cells of the root tip, especially in hairy roots, as well as in etiolated seedlings. Mostly expressed in roots, and, at lower levels, in leaves.

It is found in the cytoplasm. The protein resides in the nucleus. The enzyme catalyses (+)-minovincinine + acetyl-CoA = (+)-echitovenine + CoA. The protein operates within alkaloid biosynthesis. In terms of biological role, component of the monoterpenoid indole alkaloids (MIAs, e.g. echitovenine, tabersonine, lochnericine, 19-hydroxytabersonine and horhammericine) biosynthetic pathway; MIAs are used in cancer treatment and other medical applications. Acyltransferase catalyzing the conversion of (+)-minovincinine to (+)-echitovenine. The polypeptide is Minovincinine 19-hydroxy-O-acetyltransferase (Catharanthus roseus (Madagascar periwinkle)).